The sequence spans 394 residues: Flavin-dependent monooxygenase, oxygenase subunit HsaA (394 aa).

FMN contacts are provided by residues Trp84, 118–120 (SSY), 141–143 (WSS), Arg263, 346–347 (AT), and 368–369 (HA).

The protein belongs to the HpaH/HsaA monooxygenase family. In terms of assembly, homotetramer under anaerobic conditions. HsaAB monooxygenase consists of an oxygenase component HsaA and a reductase component HsaB.

The enzyme catalyses 3-hydroxy-9,10-secoandrosta-1,3,5(10)-triene-9,17-dione + FMNH2 + O2 = 3,4-dihydroxy-9,10-secoandrosta-1,3,5(10)-triene-9,17-dione + FMN + H2O + H(+). It participates in lipid metabolism; steroid biosynthesis. Functionally, catalyzes the o-hydroxylation of 3-hydroxy-9,10-secoandrosta-1,3,5(10)-triene-9,17-dione (3-HSA) to 3,4-dihydroxy-9,10-secoandrosta-1,3,5(10)-triene-9,17-dione (3,4-DHSA) in the catabolism of cholesterol. This is Flavin-dependent monooxygenase, oxygenase subunit HsaA from Mycobacterium tuberculosis (strain CDC 1551 / Oshkosh).